Reading from the N-terminus, the 305-residue chain is UDP-3-O-acyl-N-acetylglucosamine deacetylase (305 aa).

3 residues coordinate Zn(2+): His79, His238, and Asp242. His265 acts as the Proton donor in catalysis.

The protein belongs to the LpxC family. The cofactor is Zn(2+).

It carries out the reaction a UDP-3-O-[(3R)-3-hydroxyacyl]-N-acetyl-alpha-D-glucosamine + H2O = a UDP-3-O-[(3R)-3-hydroxyacyl]-alpha-D-glucosamine + acetate. The protein operates within glycolipid biosynthesis; lipid IV(A) biosynthesis; lipid IV(A) from (3R)-3-hydroxytetradecanoyl-[acyl-carrier-protein] and UDP-N-acetyl-alpha-D-glucosamine: step 2/6. Functionally, catalyzes the hydrolysis of UDP-3-O-myristoyl-N-acetylglucosamine to form UDP-3-O-myristoylglucosamine and acetate, the committed step in lipid A biosynthesis. In Vibrio vulnificus (strain CMCP6), this protein is UDP-3-O-acyl-N-acetylglucosamine deacetylase.